The chain runs to 387 residues: uncharacterized protein (387 aa).

A helical transmembrane segment spans residues 5–25; it reads FVLFSFPFLLLSSMLIFYQTT.

This sequence belongs to the LicD transferase family.

The protein localises to the membrane. This is an uncharacterized protein from Caenorhabditis elegans.